The following is a 517-amino-acid chain: Crotonobetaine/carnitine--CoA ligase (517 aa).

The protein belongs to the ATP-dependent AMP-binding enzyme family.

It catalyses the reaction 4-(trimethylamino)butanoate + ATP + CoA = 4-(trimethylamino)butanoyl-CoA + AMP + diphosphate. The enzyme catalyses crotonobetaine + ATP + CoA = crotonobetainyl-CoA + AMP + diphosphate. The catalysed reaction is (R)-carnitine + ATP + CoA = (R)-carnitinyl-CoA + AMP + diphosphate. Its pathway is amine and polyamine metabolism; carnitine metabolism. Functionally, catalyzes the transfer of CoA to carnitine, generating the initial carnitinyl-CoA needed for the CaiB reaction cycle. Also has activity toward crotonobetaine and gamma-butyrobetaine. The chain is Crotonobetaine/carnitine--CoA ligase from Escherichia coli O7:K1 (strain IAI39 / ExPEC).